We begin with the raw amino-acid sequence, 109 residues long: Large ribosomal subunit protein uL24 (109 aa).

The protein belongs to the universal ribosomal protein uL24 family. As to quaternary structure, part of the 50S ribosomal subunit.

Functionally, one of two assembly initiator proteins, it binds directly to the 5'-end of the 23S rRNA, where it nucleates assembly of the 50S subunit. Its function is as follows. One of the proteins that surrounds the polypeptide exit tunnel on the outside of the subunit. This chain is Large ribosomal subunit protein uL24, found in Hamiltonella defensa subsp. Acyrthosiphon pisum (strain 5AT).